A 227-amino-acid polypeptide reads, in one-letter code: Uracil-DNA glycosylase (227 aa).

The active-site Proton acceptor is D64.

The protein belongs to the uracil-DNA glycosylase (UDG) superfamily. UNG family.

It is found in the cytoplasm. It catalyses the reaction Hydrolyzes single-stranded DNA or mismatched double-stranded DNA and polynucleotides, releasing free uracil.. Excises uracil residues from the DNA which can arise as a result of misincorporation of dUMP residues by DNA polymerase or due to deamination of cytosine. This is Uracil-DNA glycosylase from Serratia proteamaculans (strain 568).